The sequence spans 655 residues: DNA topoisomerase 4 subunit B (655 aa).

ATP contacts are provided by residues Tyr9, Asn49, Asp76, 116–122 (GLHGVGA), and Lys340. Residues 387 to 397 (AARKAREEARS) are compositionally biased toward basic and acidic residues. Positions 387–419 (AARKAREEARSGKKRKKSEATLSGKLTPAGSRN) are disordered. In terms of domain architecture, Toprim spans 423–537 (NELYLVEGDS…HGKVFIALPP (115 aa)). Positions 429, 502, and 504 each coordinate Mg(2+).

This sequence belongs to the type II topoisomerase family. ParE type 2 subfamily. Heterotetramer composed of ParC and ParE. The cofactor is Mg(2+). Mn(2+) serves as cofactor. Requires Ca(2+) as cofactor.

The catalysed reaction is ATP-dependent breakage, passage and rejoining of double-stranded DNA.. Its function is as follows. Topoisomerase IV is essential for chromosome segregation. It relaxes supercoiled DNA. Performs the decatenation events required during the replication of a circular DNA molecule. The protein is DNA topoisomerase 4 subunit B of Bacillus subtilis (strain 168).